The following is a 105-amino-acid chain: Urease subunit beta (105 aa).

The protein belongs to the urease beta subunit family. Heterotrimer of UreA (gamma), UreB (beta) and UreC (alpha) subunits. Three heterotrimers associate to form the active enzyme.

The protein resides in the cytoplasm. The catalysed reaction is urea + 2 H2O + H(+) = hydrogencarbonate + 2 NH4(+). Its pathway is nitrogen metabolism; urea degradation; CO(2) and NH(3) from urea (urease route): step 1/1. The polypeptide is Urease subunit beta (Pseudomonas putida (strain ATCC 47054 / DSM 6125 / CFBP 8728 / NCIMB 11950 / KT2440)).